Here is a 152-residue protein sequence, read N- to C-terminus: Small ribosomal subunit protein uS13 (152 aa).

The protein belongs to the universal ribosomal protein uS13 family. Part of the 30S ribosomal subunit. Forms a loose heterodimer with protein S19. Forms two bridges to the 50S subunit in the 70S ribosome.

Functionally, located at the top of the head of the 30S subunit, it contacts several helices of the 16S rRNA. In the 70S ribosome it contacts the 23S rRNA (bridge B1a) and protein L5 of the 50S subunit (bridge B1b), connecting the 2 subunits; these bridges are implicated in subunit movement. The polypeptide is Small ribosomal subunit protein uS13 (Pyrobaculum aerophilum (strain ATCC 51768 / DSM 7523 / JCM 9630 / CIP 104966 / NBRC 100827 / IM2)).